The primary structure comprises 215 residues: Protein-L-isoaspartate O-methyltransferase (215 aa).

Serine 62 is an active-site residue.

Belongs to the methyltransferase superfamily. L-isoaspartyl/D-aspartyl protein methyltransferase family.

It is found in the cytoplasm. It carries out the reaction [protein]-L-isoaspartate + S-adenosyl-L-methionine = [protein]-L-isoaspartate alpha-methyl ester + S-adenosyl-L-homocysteine. Catalyzes the methyl esterification of L-isoaspartyl residues in peptides and proteins that result from spontaneous decomposition of normal L-aspartyl and L-asparaginyl residues. It plays a role in the repair and/or degradation of damaged proteins. The polypeptide is Protein-L-isoaspartate O-methyltransferase (Nitratidesulfovibrio vulgaris (strain DSM 19637 / Miyazaki F) (Desulfovibrio vulgaris)).